The sequence spans 316 residues: Holliday junction branch migration complex subunit RuvB (316 aa).

The large ATPase domain (RuvB-L) stretch occupies residues 1–165 (MQITRPHNFE…FGYIARFVSY (165 aa)). ATP is bound by residues arginine 5, glycine 46, lysine 49, threonine 50, serine 51, 112-114 (EDF), arginine 155, tyrosine 165, and arginine 202. A Mg(2+)-binding site is contributed by threonine 50. Positions 166-236 (NAEDMKQIIR…IIKKTFKSLD (71 aa)) are small ATPAse domain (RuvB-S). Positions 239 to 316 (EYGLTKDHVE…TYLLKEKLIW (78 aa)) are head domain (RuvB-H). DNA-binding residues include lysine 294 and arginine 299.

It belongs to the RuvB family. As to quaternary structure, homohexamer. Forms an RuvA(8)-RuvB(12)-Holliday junction (HJ) complex. HJ DNA is sandwiched between 2 RuvA tetramers; dsDNA enters through RuvA and exits via RuvB. An RuvB hexamer assembles on each DNA strand where it exits the tetramer. Each RuvB hexamer is contacted by two RuvA subunits (via domain III) on 2 adjacent RuvB subunits; this complex drives branch migration. In the full resolvosome a probable DNA-RuvA(4)-RuvB(12)-RuvC(2) complex forms which resolves the HJ.

Its subcellular location is the cytoplasm. The catalysed reaction is ATP + H2O = ADP + phosphate + H(+). Functionally, the RuvA-RuvB-RuvC complex processes Holliday junction (HJ) DNA during genetic recombination and DNA repair, while the RuvA-RuvB complex plays an important role in the rescue of blocked DNA replication forks via replication fork reversal (RFR). RuvA specifically binds to HJ cruciform DNA, conferring on it an open structure. The RuvB hexamer acts as an ATP-dependent pump, pulling dsDNA into and through the RuvAB complex. RuvB forms 2 homohexamers on either side of HJ DNA bound by 1 or 2 RuvA tetramers; 4 subunits per hexamer contact DNA at a time. Coordinated motions by a converter formed by DNA-disengaged RuvB subunits stimulates ATP hydrolysis and nucleotide exchange. Immobilization of the converter enables RuvB to convert the ATP-contained energy into a lever motion, pulling 2 nucleotides of DNA out of the RuvA tetramer per ATP hydrolyzed, thus driving DNA branch migration. The RuvB motors rotate together with the DNA substrate, which together with the progressing nucleotide cycle form the mechanistic basis for DNA recombination by continuous HJ branch migration. Branch migration allows RuvC to scan DNA until it finds its consensus sequence, where it cleaves and resolves cruciform DNA. The sequence is that of Holliday junction branch migration complex subunit RuvB from Mycoplasmopsis synoviae (strain 53) (Mycoplasma synoviae).